The primary structure comprises 189 residues: Protein GrpE (189 aa).

Over residues 1–12 (MDKKKHGSHAGA) the composition is skewed to basic residues. A disordered region spans residues 1-36 (MDKKKHGSHAGAHHTDEPAAETVAPAAEGAPAAADR). Low complexity predominate over residues 20 to 34 (AETVAPAAEGAPAAA).

The protein belongs to the GrpE family. As to quaternary structure, homodimer.

It is found in the cytoplasm. In terms of biological role, participates actively in the response to hyperosmotic and heat shock by preventing the aggregation of stress-denatured proteins, in association with DnaK and GrpE. It is the nucleotide exchange factor for DnaK and may function as a thermosensor. Unfolded proteins bind initially to DnaJ; upon interaction with the DnaJ-bound protein, DnaK hydrolyzes its bound ATP, resulting in the formation of a stable complex. GrpE releases ADP from DnaK; ATP binding to DnaK triggers the release of the substrate protein, thus completing the reaction cycle. Several rounds of ATP-dependent interactions between DnaJ, DnaK and GrpE are required for fully efficient folding. The chain is Protein GrpE from Geobacter metallireducens (strain ATCC 53774 / DSM 7210 / GS-15).